The following is a 270-amino-acid chain: Tetraspanin-17 (270 aa).

At 1–19 the chain is on the cytoplasmic side; the sequence is MPGKHQHFQEPEVGCCGKY. Residues 20–40 traverse the membrane as a helical segment; that stretch reads FLFGFNIVFWVLGALFLAIGL. Residues 41-63 are Extracellular-facing; that stretch reads WAWSEKGVLSNISALTDLGGLDP. Asn51 carries an N-linked (GlcNAc...) asparagine glycan. The helical transmembrane segment at 64-84 threads the bilayer; it reads VWLFVVVGGVMSVLGFAGCIG. Topologically, residues 85–94 are cytoplasmic; it reads ALRENTFLLK. A helical transmembrane segment spans residues 95–115; the sequence is FFSVFLGLIFFLELATGILAF. The Extracellular portion of the chain corresponds to 116 to 234; that stretch reads VFKDWIRDQL…GQFEKWLQDN (119 aa). Cystine bridges form between Cys155–Cys223, Cys156–Cys188, Cys172–Cys182, and Cys189–Cys202. An N-linked (GlcNAc...) asparagine glycan is attached at Asn171. Residues 235–255 traverse the membrane as a helical segment; the sequence is LIVVAGVFVGIALLQIFGICL. Over 256–270 the chain is Cytoplasmic; sequence AQNLVSDIKAVKANW.

It belongs to the tetraspanin (TM4SF) family. Interacts with ADAM10; the interaction influences ADAM10 substrate specificity, endocytosis and turnover.

The protein resides in the cell membrane. Its function is as follows. Part of TspanC8 subgroup, composed of 6 members that interact with the transmembrane metalloprotease ADAM10. This interaction is required for ADAM10 exit from the endoplasmic reticulum and for enzymatic maturation and trafficking to the cell surface as well as substrate specificity. Different TspanC8/ADAM10 complexes have distinct substrates. Seems to regulate VE-cadherin expression in endothelial cells probably through interaction with ADAM10, promoting leukocyte transmigration. The protein is Tetraspanin-17 (TSPAN17) of Bos taurus (Bovine).